The following is a 59-amino-acid chain: Potassium channel toxin alpha-KTx 3.10 (59 aa).

The first 22 residues, 1–22 (MKVFFAVLIALFVCSMVIGIHG), serve as a signal peptide directing secretion. 3 disulfides stabilise this stretch: Cys-30–Cys-50, Cys-36–Cys-55, and Cys-40–Cys-57.

This sequence belongs to the short scorpion toxin superfamily. Potassium channel inhibitor family. Alpha-KTx 03 subfamily. Expressed by the venom gland.

It localises to the secreted. Inhibits insect potassium channel. Is at least a 100-fold more potent against the Drosophila Shaker channel than towards its mammalian homologs Kv1.1/KCNA1 and Kv1.3/KCNA3. This chain is Potassium channel toxin alpha-KTx 3.10, found in Buthus israelis (Israeli scorpion).